The sequence spans 62 residues: MKVLILIMIIASLMIMGVEMDRDSCVDKSRCAKYGYYQECQDCCKNAGHNGGTCMFFKCKCA.

An N-terminal signal peptide occupies residues 1–20; sequence MKVLILIMIIASLMIMGVEM. 4 disulfides stabilise this stretch: Cys25/Cys43, Cys31/Cys54, Cys40/Cys59, and Cys44/Cys61.

It belongs to the ergtoxin family. Gamma-KTx 1 subfamily. In terms of processing, after protein storage at -20 Celsius degrees during a couple of months, the Met-55 of a small number of toxins is naturally oxidized. This oxidized form is about three orders of magnitude less efficient (IC(50)=15 uM) than non-oxidized form. As to expression, expressed by the venom gland.

It is found in the secreted. In terms of biological role, blocks human and rat Kv11.1/KCNH2/ERG1 and Kv11.3/KCNH7/ERG3, as well as rat (but not human) Kv11.2/KCNH6/ERG2 by binding to channel outer vestibule (S5P domain) with a 1:1 stoichiometry. Inhibition data are the following: hERG1 (reversible, IC(50)~7 nM), rERG1 (reversible, Kd=6.8 nM), rERG2 (irreversible, Kd=2.8 nM), hERG3 (irreversible, Kd=4.05 nM) and rERG3 (reversible, Kd=38.1 nM) potassium channels. The toxin potency is not affected by elevating potassium ion concentration from 2 to 98 mM. This toxin only blocks channels in a closed state. At high toxin concentrations, block of Kv11.1/KCNH2/ERG1 macroscopic current is incomplete (93.5%). This suggests a kinetic mechanism model with two different states of toxin-channel binding (T+C=TC*=TC; in the TC* state, the toxin binds the channel but does not occlude the pore, whereas in the TC state the toxin binds and occludes the pore). In this model, incomplete block is explained by the relatively fast dissociation rate from the blocked channel conformation (TC) relative to the rate of conversion of the toxin-channel encounter complex (TC*) to the blocked channel conformation (TC). This is Potassium channel toxin gamma-KTx 1.1 from Centruroides noxius (Mexican scorpion).